The sequence spans 645 residues: DNA mismatch repair protein MutL (645 aa).

The tract at residues V371–N403 is disordered. Residues H372 to N387 are compositionally biased toward basic and acidic residues. Low complexity predominate over residues S390–S402.

It belongs to the DNA mismatch repair MutL/HexB family.

Its function is as follows. This protein is involved in the repair of mismatches in DNA. It is required for dam-dependent methyl-directed DNA mismatch repair. May act as a 'molecular matchmaker', a protein that promotes the formation of a stable complex between two or more DNA-binding proteins in an ATP-dependent manner without itself being part of a final effector complex. The sequence is that of DNA mismatch repair protein MutL from Staphylococcus epidermidis (strain ATCC 35984 / DSM 28319 / BCRC 17069 / CCUG 31568 / BM 3577 / RP62A).